Consider the following 331-residue polypeptide: Protein RecA (331 aa).

ATP is bound at residue 67–74 (GPESSGKT).

It belongs to the RecA family.

It is found in the cytoplasm. Can catalyze the hydrolysis of ATP in the presence of single-stranded DNA, the ATP-dependent uptake of single-stranded DNA by duplex DNA, and the ATP-dependent hybridization of homologous single-stranded DNAs. It interacts with LexA causing its activation and leading to its autocatalytic cleavage. The polypeptide is Protein RecA (Wigglesworthia glossinidia brevipalpis).